Consider the following 338-residue polypeptide: Methionyl-tRNA formyltransferase (338 aa).

110–113 (SLLP) provides a ligand contact to (6S)-5,6,7,8-tetrahydrofolate.

The protein belongs to the Fmt family.

It carries out the reaction L-methionyl-tRNA(fMet) + (6R)-10-formyltetrahydrofolate = N-formyl-L-methionyl-tRNA(fMet) + (6S)-5,6,7,8-tetrahydrofolate + H(+). Its function is as follows. Attaches a formyl group to the free amino group of methionyl-tRNA(fMet). The formyl group appears to play a dual role in the initiator identity of N-formylmethionyl-tRNA by promoting its recognition by IF2 and preventing the misappropriation of this tRNA by the elongation apparatus. The sequence is that of Methionyl-tRNA formyltransferase from Synechococcus sp. (strain CC9605).